Consider the following 765-residue polypeptide: Protein BCH2 (765 aa).

Residues 1 to 31 (MSFLWGSTKSKKGKNKKAAGSLPSGVVPQQR) form a disordered region. Residues 735–765 (LECLSKNRNEACLAYERPLPDLPSTIKPLAD) form a CHS5-binding region.

This sequence belongs to the CHAPS family. In terms of assembly, component of the CHS5/6 complex composed of the 4 CHAPS proteins BCH1, BCH2, BUD7, and CHS6 as well as at least CHS5 and GTP-bound ARF1. The complex interacts with the cargo protein CHS3.

The protein resides in the golgi apparatus. The protein localises to the trans-Golgi network membrane. Functionally, member of the CHS5-ARF1P-binding proteins (CHAPS) which mediates export of specific cargo proteins, including chitin synthase CHS3. This is Protein BCH2 (BCH2) from Saccharomyces cerevisiae (strain ATCC 204508 / S288c) (Baker's yeast).